An 861-amino-acid polypeptide reads, in one-letter code: Bifunctional uridylyltransferase/uridylyl-removing enzyme (861 aa).

Positions methionine 1–arginine 321 are uridylyltransferase. The segment at leucine 322–threonine 678 is uridylyl-removing. Residues valine 440–leucine 562 form the HD domain. ACT domains follow at residues glutamate 679 to arginine 760 and glutamine 788 to tyrosine 861.

Belongs to the GlnD family. It depends on Mg(2+) as a cofactor.

It catalyses the reaction [protein-PII]-L-tyrosine + UTP = [protein-PII]-uridylyl-L-tyrosine + diphosphate. It carries out the reaction [protein-PII]-uridylyl-L-tyrosine + H2O = [protein-PII]-L-tyrosine + UMP + H(+). Its activity is regulated as follows. Uridylyltransferase (UTase) activity is inhibited by glutamine, while glutamine activates uridylyl-removing (UR) activity. Functionally, modifies, by uridylylation and deuridylylation, the PII regulatory proteins (GlnB and homologs), in response to the nitrogen status of the cell that GlnD senses through the glutamine level. Under low glutamine levels, catalyzes the conversion of the PII proteins and UTP to PII-UMP and PPi, while under higher glutamine levels, GlnD hydrolyzes PII-UMP to PII and UMP (deuridylylation). Thus, controls uridylylation state and activity of the PII proteins, and plays an important role in the regulation of nitrogen assimilation and metabolism. The chain is Bifunctional uridylyltransferase/uridylyl-removing enzyme from Legionella pneumophila (strain Lens).